We begin with the raw amino-acid sequence, 122 residues long: Ribosome-binding factor A (122 aa).

Belongs to the RbfA family. Monomer. Binds 30S ribosomal subunits, but not 50S ribosomal subunits or 70S ribosomes.

The protein localises to the cytoplasm. Functionally, one of several proteins that assist in the late maturation steps of the functional core of the 30S ribosomal subunit. Associates with free 30S ribosomal subunits (but not with 30S subunits that are part of 70S ribosomes or polysomes). Required for efficient processing of 16S rRNA. May interact with the 5'-terminal helix region of 16S rRNA. This Streptococcus agalactiae serotype III (strain NEM316) protein is Ribosome-binding factor A.